A 311-amino-acid chain; its full sequence is Protease HtpX homolog 1 (311 aa).

The next 2 membrane-spanning stretches (helical) occupy residues 12 to 32 (VISLGLTIISEGIVLIGIASL) and 35 to 55 (ISLFFIFPALVIFWLFQWIIS). Histidine 137 is a Zn(2+) binding site. The active site involves glutamate 138. Residue histidine 141 coordinates Zn(2+). The next 2 membrane-spanning stretches (helical) occupy residues 159–179 (VLGYISTLLMNFGYLALFLAA) and 184–204 (LLFAIAALAIGFVIFVVTFIL). Glutamate 216 contributes to the Zn(2+) binding site.

The protein belongs to the peptidase M48B family. The cofactor is Zn(2+).

The protein resides in the cell membrane. This is Protease HtpX homolog 1 from Saccharolobus solfataricus (strain ATCC 35092 / DSM 1617 / JCM 11322 / P2) (Sulfolobus solfataricus).